The primary structure comprises 207 residues: Chaperone protein TorD (207 aa).

It belongs to the TorD/DmsD family. TorD subfamily.

It localises to the cytoplasm. Its function is as follows. Involved in the biogenesis of TorA. Acts on TorA before the insertion of the molybdenum cofactor and, as a result, probably favors a conformation of the apoenzyme that is competent for acquiring the cofactor. The chain is Chaperone protein TorD from Aggregatibacter aphrophilus (strain NJ8700) (Haemophilus aphrophilus).